Reading from the N-terminus, the 30-residue chain is Diuretic hormone 2 (30 aa).

Position 30 is a valine amide (valine 30).

It belongs to the sauvagine/corticotropin-releasing factor/urotensin I family.

Its subcellular location is the secreted. Functionally, regulation of fluid secretion. This Manduca sexta (Tobacco hawkmoth) protein is Diuretic hormone 2.